The sequence spans 282 residues: Pantothenate synthetase (282 aa).

30–37 (MGFLHDGH) serves as a coordination point for ATP. His-37 (proton donor) is an active-site residue. Gln-60 provides a ligand contact to (R)-pantoate. Gln-60 provides a ligand contact to beta-alanine. 146-149 (GQKD) contributes to the ATP binding site. A (R)-pantoate-binding site is contributed by Gln-152. Residues Ile-175 and 183–186 (KSSR) contribute to the ATP site.

It belongs to the pantothenate synthetase family. Homodimer.

Its subcellular location is the cytoplasm. The enzyme catalyses (R)-pantoate + beta-alanine + ATP = (R)-pantothenate + AMP + diphosphate + H(+). The protein operates within cofactor biosynthesis; (R)-pantothenate biosynthesis; (R)-pantothenate from (R)-pantoate and beta-alanine: step 1/1. Catalyzes the condensation of pantoate with beta-alanine in an ATP-dependent reaction via a pantoyl-adenylate intermediate. This chain is Pantothenate synthetase, found in Campylobacter jejuni subsp. doylei (strain ATCC BAA-1458 / RM4099 / 269.97).